The primary structure comprises 276 residues: Urease accessory protein UreD (276 aa).

The protein belongs to the UreD family. UreD, UreF and UreG form a complex that acts as a GTP-hydrolysis-dependent molecular chaperone, activating the urease apoprotein by helping to assemble the nickel containing metallocenter of UreC. The UreE protein probably delivers the nickel.

The protein localises to the cytoplasm. Its function is as follows. Required for maturation of urease via the functional incorporation of the urease nickel metallocenter. The protein is Urease accessory protein UreD of Polaromonas naphthalenivorans (strain CJ2).